The sequence spans 314 residues: Methionyl-tRNA formyltransferase (314 aa).

A (6S)-5,6,7,8-tetrahydrofolate-binding site is contributed by 110 to 113; the sequence is SLLP.

Belongs to the Fmt family.

It catalyses the reaction L-methionyl-tRNA(fMet) + (6R)-10-formyltetrahydrofolate = N-formyl-L-methionyl-tRNA(fMet) + (6S)-5,6,7,8-tetrahydrofolate + H(+). In terms of biological role, attaches a formyl group to the free amino group of methionyl-tRNA(fMet). The formyl group appears to play a dual role in the initiator identity of N-formylmethionyl-tRNA by promoting its recognition by IF2 and preventing the misappropriation of this tRNA by the elongation apparatus. This is Methionyl-tRNA formyltransferase from Bacillus cereus (strain ATCC 14579 / DSM 31 / CCUG 7414 / JCM 2152 / NBRC 15305 / NCIMB 9373 / NCTC 2599 / NRRL B-3711).